The chain runs to 130 residues: Probable 15 kDa heat shock protein (130 aa).

One can recognise a sHSP domain in the interval 21–130 (ERVRILAPRV…LTKKIEVRSE (110 aa)).

This sequence belongs to the small heat shock protein (HSP20) family.

In Leptospira interrogans serogroup Icterohaemorrhagiae serovar Lai (strain 56601), this protein is Probable 15 kDa heat shock protein (hsp15).